Reading from the N-terminus, the 593-residue chain is MRVTQEFYELLRNRINISDVVRQKLALTRKSSNYVGLCPFHQEKTPSFTVSDSKRFFYCFGCKASGDVIKFTSNISGLSYNESAIKLANDYGIEIPKLTVKQKEFYEESDNILNILELANKFFRTQLTPEILNYLNQRNITETTIKEFSIGFSPRNNKFAKFFLDKKIDITTLGQAGLIGKRKNGEIYNLFSNRITIPIRNIYNKIVGFGARVLGNGLPKYLNSYETIVFQKNDTLYGEHKAISSSYKKNRSILVEGYFDVIALHQAGFSEVVASLGTSVTENHLHKLWRACDEIILCLDGDNAGIKASIRTINLALPLVNSEKKISFIRLPSGLDPDDVVNKNGADFFAKLIDKRISLSEMIWYIEYSGKNFKTAEEKANLEKNLKDYCNKISDSNLKASYYRFFKDQIWQNLVIKQKKIITQNFNSSLIASSHCYSELEMLEHAFCALLIKFPIMLAEKDIRDFILNLNFNNKSLEEFRNWYLNEIIDNKVEESEITAIVEKTSFFDIFLLLSKADNLFLDISFNKNNIRLDLLWQWLYKKYYLINLQQEYAISINGNHDFEKVLLYKKEILKIVNELQVLNESFINQTIT.

The segment at 38-62 adopts a CHC2-type zinc-finger fold; that stretch reads CPFHQEKTPSFTVSDSKRFFYCFGC. The Toprim domain occupies 250-332; it reads NRSILVEGYF…EKKISFIRLP (83 aa). Residues glutamate 256, aspartate 300, and aspartate 302 each contribute to the Mg(2+) site.

Belongs to the DnaG primase family. As to quaternary structure, monomer. Interacts with DnaB. Requires Zn(2+) as cofactor. The cofactor is Mg(2+).

It carries out the reaction ssDNA + n NTP = ssDNA/pppN(pN)n-1 hybrid + (n-1) diphosphate.. RNA polymerase that catalyzes the synthesis of short RNA molecules used as primers for DNA polymerase during DNA replication. The chain is DNA primase from Rickettsia typhi (strain ATCC VR-144 / Wilmington).